The primary structure comprises 351 residues: Hepatocyte nuclear factor 3-gamma (351 aa).

Residues 52-73 (PGGLPASPLPTGPLAPPAPTAP) show a composition bias toward pro residues. Residues 52–94 (PGGLPASPLPTGPLAPPAPTAPLGPTFPGLGASTGGGSSSGYG) are disordered. Positions 83–94 (ASTGGGSSSGYG) are enriched in gly residues. A DNA-binding region (fork-head) is located at residues 118–212 (KPPYSYISLI…ENGCYLRRQK (95 aa)). Residues 218 to 275 (EKVKKGGGGSSASRNSAGSASTATAPAATVASTPQPQPPPPEPEAQGGDEVGALDCGS) form a disordered region. The segment covering 228-251 (SASRNSAGSASTATAPAATVASTP) has biased composition (low complexity).

The protein localises to the nucleus. Its function is as follows. Transcription activator for a number of liver genes such as AFP, albumin, tyrosine aminotransferase, PEPCK, etc. Interacts with the cis-acting regulatory regions of these genes. The chain is Hepatocyte nuclear factor 3-gamma (FOXA3) from Bos taurus (Bovine).